We begin with the raw amino-acid sequence, 435 residues long: Tyrosine-protein phosphatase non-receptor type 1 (435 aa).

M1 bears the N-acetylmethionine mark. One can recognise a Tyrosine-protein phosphatase domain in the interval 3-277 (MEKEFEQIDK…RFSYLAVIEG (275 aa)). The residue at position 20 (Y20) is a Phosphotyrosine. At S50 the chain carries Phosphoserine; by PKB/AKT1, CLK1 and CLK2. Position 66 is a phosphotyrosine; by EGFR (Y66). Substrate-binding positions include D181 and 215-221 (CSAGIGR). Catalysis depends on C215, which acts as the Phosphocysteine intermediate. C215 carries the cysteine persulfide; alternate modification. C215 is subject to Cysteine sulfenic acid (-SOH); alternate. Residue C215 is modified to Cysteine sulfinic acid (-SO2H); alternate. At C215 the chain carries S-nitrosocysteine; in reversibly inhibited form. Residues 215–216 (CS) constitute a cross-link (n,N-(cysteine-1,S-diyl)serine (Cys-Ser); in inhibited form). S242 and S243 each carry phosphoserine; by CLK1 and CLK2. A substrate-binding site is contributed by Q262. The segment covering 338-351 (TQEDKDCPIKEEKG) has biased composition (basic and acidic residues). The disordered stretch occupies residues 338–359 (TQEDKDCPIKEEKGSPLNAAPY). 3 positions are modified to phosphoserine: S352, S363, and S365. Residue T368 is modified to Phosphothreonine. S378 is subject to Phosphoserine; by PKC. Positions 378-398 (SLRGAQAASPAKGEPSLPEKD) are disordered. S386 is modified (phosphoserine; by CDK1).

This sequence belongs to the protein-tyrosine phosphatase family. Non-receptor class 1 subfamily. Interacts with EPHA3 (phosphorylated); dephosphorylates EPHA3 and may regulate its trafficking and function. Interacts with MET. Interacts with NCK1. Oxidized on Cys-215; the Cys-SOH formed in response to redox signaling reacts with the alpha-amido of the following residue to form a sulfenamide cross-link, triggering a conformational change that inhibits substrate binding and activity. The active site can be restored by reduction. Post-translationally, ser-50 is the major site of phosphorylation as compared to Ser-242 and Ser-243. Activated by phosphorylation at Ser-50. In terms of processing, S-nitrosylation of Cys-215 inactivates the enzyme activity. Sulfhydration at Cys-215 following endoplasmic reticulum stress inactivates the enzyme activity, promoting EIF2AK3/PERK activity. In terms of tissue distribution, expressed in keratinocytes (at protein level).

It is found in the endoplasmic reticulum membrane. It catalyses the reaction O-phospho-L-tyrosyl-[protein] + H2O = L-tyrosyl-[protein] + phosphate. In terms of biological role, tyrosine-protein phosphatase which acts as a regulator of endoplasmic reticulum unfolded protein response. Mediates dephosphorylation of EIF2AK3/PERK; inactivating the protein kinase activity of EIF2AK3/PERK. May play an important role in CKII- and p60c-src-induced signal transduction cascades. May regulate the EFNA5-EPHA3 signaling pathway which modulates cell reorganization and cell-cell repulsion. May also regulate the hepatocyte growth factor receptor signaling pathway through dephosphorylation of MET. This is Tyrosine-protein phosphatase non-receptor type 1 (PTPN1) from Homo sapiens (Human).